We begin with the raw amino-acid sequence, 320 residues long: UV DNA damage endonuclease (320 aa).

It belongs to the uve1/UvsE family.

In terms of biological role, component in a DNA repair pathway. Removal of UV LIGHT damaged nucleotides. Recognizes pyrimidine dimers and cleave a phosphodiester bond immediately 5' to the lesion. The polypeptide is UV DNA damage endonuclease (Bacillus velezensis (strain DSM 23117 / BGSC 10A6 / LMG 26770 / FZB42) (Bacillus amyloliquefaciens subsp. plantarum)).